A 37-amino-acid polypeptide reads, in one-letter code: Protein YnaM (37 aa).

The helical transmembrane segment at 4–24 (ILIITSLLIIFSIFSHALIKL) threads the bilayer.

The protein localises to the cell inner membrane. This is Protein YnaM from Escherichia coli (strain K12).